We begin with the raw amino-acid sequence, 505 residues long: uncharacterized protein (505 aa).

The first 19 residues, 1–19 (MILFTAIILVASVVHVVVS), serve as a signal peptide directing secretion. Residues 20-483 (SPQQCYYCVE…EQPNSAPRGE (464 aa)) lie on the Extracellular side of the membrane. Residues 484 to 504 (IHQLFRCTFVAVFIVFACFIV) traverse the membrane as a helical segment. Position 505 (Cys-505) is a topological domain, cytoplasmic.

As to expression, component of the acid-insoluble and acid-soluble organic matrix of the aragonitic skeleton (at protein level).

Its subcellular location is the membrane. This is an uncharacterized protein from Acropora millepora (Staghorn coral).